The following is a 549-amino-acid chain: Cytoplasmic trehalase (549 aa).

Substrate contacts are provided by residues arginine 168, 175–176, asparagine 212, 221–223, 292–294, and glycine 324; these read WD, RSQ, and RDE. Catalysis depends on proton donor/acceptor residues aspartate 326 and glutamate 509. Residue glutamate 525 coordinates substrate.

This sequence belongs to the glycosyl hydrolase 37 family. In terms of assembly, monomer.

The protein localises to the cytoplasm. It catalyses the reaction alpha,alpha-trehalose + H2O = alpha-D-glucose + beta-D-glucose. The protein operates within glycan degradation; trehalose degradation; D-glucose from alpha,alpha-trehalose: step 1/1. In terms of biological role, hydrolyzes trehalose to glucose. Could be involved, in cells returning to low osmolarity conditions, in the utilization of the accumulated cytoplasmic trehalose, which was synthesized in response to high osmolarity. The protein is Cytoplasmic trehalase of Escherichia coli O157:H7.